A 532-amino-acid chain; its full sequence is Di/tripeptide-binding protein 2 (532 aa).

Residues 1 to 24 (MRPRSALRYSLLLLAFAASAAIQA) form the signal peptide.

It belongs to the bacterial solute-binding protein 5 family. In terms of assembly, the complex is composed of two ATP-binding proteins (DppD and DppF), two transmembrane proteins (DppB and DppC) and a solute-binding protein (DppA2). Five orthologous SBPs (DppA1-A5) are present in P.aeruginosa, which increases the substrate specificity of the DppBCDF transporter.

Functionally, part of the ABC transporter DppABCDF involved in the uptake of various di/tripeptides. Shows high flexibility on substrate recognition. Efficiently uses tripeptides. The protein is Di/tripeptide-binding protein 2 of Pseudomonas aeruginosa (strain UCBPP-PA14).